A 544-amino-acid chain; its full sequence is Apolipoprotein N-acyltransferase 1 (544 aa).

The next 6 helical transmembrane spans lie at 30 to 50, 57 to 79, 91 to 111, 115 to 135, 157 to 177, and 197 to 217; these read LNLN…FLLL, FSFL…WIIF, KYCI…SYFS, FIFQ…GFLG, IFGV…SASF, and PMMI…FTKI. A CN hydrolase domain is found at 225 to 501; that stretch reads ARIALVQPNR…KDILVADVTV (277 aa). Glu272 serves as the catalytic Proton acceptor. Lys360 is an active-site residue. Cys412 serves as the catalytic Nucleophile. Residues 514–534 traverse the membrane as a helical segment; the sequence is GDFFGVLCTIVLILNLCFIII.

It belongs to the CN hydrolase family. Apolipoprotein N-acyltransferase subfamily.

The protein localises to the cell inner membrane. The enzyme catalyses N-terminal S-1,2-diacyl-sn-glyceryl-L-cysteinyl-[lipoprotein] + a glycerophospholipid = N-acyl-S-1,2-diacyl-sn-glyceryl-L-cysteinyl-[lipoprotein] + a 2-acyl-sn-glycero-3-phospholipid + H(+). It functions in the pathway protein modification; lipoprotein biosynthesis (N-acyl transfer). Catalyzes the phospholipid dependent N-acylation of the N-terminal cysteine of apolipoprotein, the last step in lipoprotein maturation. The chain is Apolipoprotein N-acyltransferase 1 from Treponema denticola (strain ATCC 35405 / DSM 14222 / CIP 103919 / JCM 8153 / KCTC 15104).